Consider the following 349-residue polypeptide: Probable inactive tRNA-specific adenosine deaminase-like protein 3 (349 aa).

Met-1 carries the post-translational modification N-acetylmethionine. The segment at 1-25 (MEPTSGFAEQPGPVKAESEEQEPAQ) is disordered. The CMP/dCMP-type deaminase domain maps to 171–334 (AAMQTHMERA…PDLNHRFQVF (164 aa)). The Zn(2+) site is built by His-223, Cys-289, and Cys-292.

Belongs to the cytidine and deoxycytidylate deaminase family. ADAT3 subfamily. The cofactor is Zn(2+).

The chain is Probable inactive tRNA-specific adenosine deaminase-like protein 3 (Adat3) from Mus musculus (Mouse).